The sequence spans 78 residues: Large ribosomal subunit protein bL28 (78 aa).

The protein belongs to the bacterial ribosomal protein bL28 family.

The chain is Large ribosomal subunit protein bL28 from Pseudomonas aeruginosa (strain LESB58).